We begin with the raw amino-acid sequence, 283 residues long: ATP phosphoribosyltransferase (283 aa).

This sequence belongs to the ATP phosphoribosyltransferase family. Long subfamily. Mg(2+) serves as cofactor.

It localises to the cytoplasm. It catalyses the reaction 1-(5-phospho-beta-D-ribosyl)-ATP + diphosphate = 5-phospho-alpha-D-ribose 1-diphosphate + ATP. The protein operates within amino-acid biosynthesis; L-histidine biosynthesis; L-histidine from 5-phospho-alpha-D-ribose 1-diphosphate: step 1/9. With respect to regulation, feedback inhibited by histidine. Its function is as follows. Catalyzes the condensation of ATP and 5-phosphoribose 1-diphosphate to form N'-(5'-phosphoribosyl)-ATP (PR-ATP). Has a crucial role in the pathway because the rate of histidine biosynthesis seems to be controlled primarily by regulation of HisG enzymatic activity. This is ATP phosphoribosyltransferase from Bacteroides fragilis (strain ATCC 25285 / DSM 2151 / CCUG 4856 / JCM 11019 / LMG 10263 / NCTC 9343 / Onslow / VPI 2553 / EN-2).